The chain runs to 710 residues: Secretin OutD (710 aa).

Residues 1 to 27 (MLGKGIKKSWGWLGLTVLLLGSPCGWA) form the signal peptide. The interval 28–105 (AEFSASFKGT…DNGVLKVIRS (78 aa)) is N0. Residues 123-190 (IGDELVTRVV…DIVNTVDKTG (68 aa)) are N1. Positions 192-262 (REMVTVPLTY…VEMIRQLDRK (71 aa)) are N2. The segment at 288-399 (GNGTSGNRNS…INQLDIRRPQ (112 aa)) is N3. Positions 289-353 (NGTSGNRNSS…AFGSTSSSGG (65 aa)) are disordered. Residues 401–648 (LVEAIIAEIQ…MLFLRPTIIR (248 aa)) form a secretin region. The tract at residues 691–710 (TYTFRQVQSSISDFYKPEGR) is s domain.

Belongs to the bacterial secretin family. GSP D subfamily. As to quaternary structure, forms a cylindrical channel with 15 subunits. Interacts with pilotin OutS.

The protein resides in the cell outer membrane. Involved in a type II secretion system (T2SS, formerly general secretion pathway, GSP) for the export of proteins. Required for the translocation of the multiple pectic enzymes. This subunit forms the outer membrane channel. In Dickeya dadantii (strain 3937) (Erwinia chrysanthemi (strain 3937)), this protein is Secretin OutD (outD).